We begin with the raw amino-acid sequence, 373 residues long: Cobalt-precorrin-5B C(1)-methyltransferase (373 aa).

It belongs to the CbiD family.

The catalysed reaction is Co-precorrin-5B + S-adenosyl-L-methionine = Co-precorrin-6A + S-adenosyl-L-homocysteine. It participates in cofactor biosynthesis; adenosylcobalamin biosynthesis; cob(II)yrinate a,c-diamide from sirohydrochlorin (anaerobic route): step 6/10. Its function is as follows. Catalyzes the methylation of C-1 in cobalt-precorrin-5B to form cobalt-precorrin-6A. This Polaromonas sp. (strain JS666 / ATCC BAA-500) protein is Cobalt-precorrin-5B C(1)-methyltransferase.